The sequence spans 537 residues: Methionine--tRNA ligase (537 aa).

The 'HIGH' region signature appears at 11–21 (AYPNAAPHIGH). A 'KMSKS' region motif is present at residues 301–305 (KMSKS). ATP is bound at residue Lys304. A disordered region spans residues 503–537 (PPPTGVFPRYQPSEIEGADPVKSSSKRREHNKRRE). The segment covering 526–537 (SSKRREHNKRRE) has biased composition (basic residues).

Belongs to the class-I aminoacyl-tRNA synthetase family. MetG type 2B subfamily. As to quaternary structure, monomer.

The protein resides in the cytoplasm. It carries out the reaction tRNA(Met) + L-methionine + ATP = L-methionyl-tRNA(Met) + AMP + diphosphate. In terms of biological role, is required not only for elongation of protein synthesis but also for the initiation of all mRNA translation through initiator tRNA(fMet) aminoacylation. The sequence is that of Methionine--tRNA ligase from Mycobacterium leprae (strain TN).